A 154-amino-acid chain; its full sequence is Ribosome maturation factor RimP (154 aa).

This sequence belongs to the RimP family.

Its subcellular location is the cytoplasm. Required for maturation of 30S ribosomal subunits. This Clostridium novyi (strain NT) protein is Ribosome maturation factor RimP.